A 566-amino-acid chain; its full sequence is Membrane protein insertase YidC (566 aa).

The chain crosses the membrane as a helical span at residues 7-27 (ILIVALAIVSYVMVLKWNQDY). The disordered stretch occupies residues 38-72 (ASSTTAPGLPDAPTGTSAANDDIPRAASDTTAPAE). 5 helical membrane-spanning segments follow: residues 347-367 (LELT…FWLL), 373-393 (LVGN…GIFF), 443-463 (LGGC…YWVL), 474-494 (FMLW…PIIM), and 521-541 (PIIF…YWVV).

The protein belongs to the OXA1/ALB3/YidC family. Type 1 subfamily. Interacts with the Sec translocase complex via SecD. Specifically interacts with transmembrane segments of nascent integral membrane proteins during membrane integration.

Its subcellular location is the cell inner membrane. In terms of biological role, required for the insertion and/or proper folding and/or complex formation of integral membrane proteins into the membrane. Involved in integration of membrane proteins that insert both dependently and independently of the Sec translocase complex, as well as at least some lipoproteins. Aids folding of multispanning membrane proteins. The protein is Membrane protein insertase YidC of Pseudomonas fluorescens (strain ATCC BAA-477 / NRRL B-23932 / Pf-5).